Here is a 117-residue protein sequence, read N- to C-terminus: Carboxysome shell protein CcmK4 (117 aa).

In terms of domain architecture, BMC spans alanine 5 to proline 91.

The protein belongs to the bacterial microcompartments protein family. CcmK subfamily. As to quaternary structure, crystallizes as a homohexamer. Interacts stably with CcmK3, forming heterohexamers that can make dodecamers. Heterohexamers have a 1:2 CcmK3:CcmK4 stoichiometry. Upon expression in E.coli forms large aggregates.

The protein resides in the carboxysome. In terms of biological role, a probably essential, minor shell protein of the carboxysome, a polyhedral inclusion where RuBisCO (ribulose bisphosphate carboxylase, rbcL-rbcS) is sequestered. Hexamers form sheets that form the facets of the polyhedral carboxysome. In PCC 7418 there are several CcmK paralogs with presumably functional differences. This subunit can probably make both homohexamers and heterohexamers with CcmK3. Both hexamers can also make dodecamers, formation depends on buffer conditions. This Halothece sp. (strain PCC 7418) (Synechococcus sp. (strain PCC 7418)) protein is Carboxysome shell protein CcmK4.